Consider the following 344-residue polypeptide: MDSYSAPESTPSASSRPEDYFIGATPLQKRLESVRKQSSFILTPPRRKIPQCSQLQEDVDPQKVAFLLHKQWTLYSLTPLYKFSYSNLKEYSRLLNAFIVAEKQKGLAVEVGEDFNIKVIFSTLLGMKGTQRDPEAFLVQIVSKSQLPSENREGKVLWTGWFCCVFGDSLLETVSEDFTCLPLFLANGAESNTAIIGTWFQKTFDCYFSPLAINAFNLSWMAAMWTACKMDHYVATTEFLWSVPCSPQSLDISFAIHPEDAKALWDSVHKTPGEVTQEEVDLFMDCLYSHFHRHFKIHLSATRLVRVSTSVASAHTDGKIKILCHKYLIGVLAYLTELAIFQIE.

Ser-39 is modified (phosphoserine). Thr-43 carries the post-translational modification Phosphothreonine. Ser-53 bears the Phosphoserine mark.

Belongs to the CENP-L/IML3 family. As to quaternary structure, component of the CENPA-CAD complex, composed of CENPI, CENPK, CENPL, CENPO, CENPP, CENPQ, CENPR and CENPS. The CENPA-CAD complex interacts with the CENPA-NAC complex, at least composed of CENPA, CENPC, CENPH, CENPM, CENPN, CENPT and CENPU.

It localises to the nucleus. It is found in the chromosome. The protein localises to the centromere. In terms of biological role, component of the CENPA-CAD (nucleosome distal) complex, a complex recruited to centromeres which is involved in assembly of kinetochore proteins, mitotic progression and chromosome segregation. May be involved in incorporation of newly synthesized CENPA into centromeres via its interaction with the CENPA-NAC complex. The sequence is that of Centromere protein L (CENPL) from Homo sapiens (Human).